Here is a 126-residue protein sequence, read N- to C-terminus: Large ribosomal subunit protein bL12 (126 aa).

This sequence belongs to the bacterial ribosomal protein bL12 family. Homodimer. Part of the ribosomal stalk of the 50S ribosomal subunit. Forms a multimeric L10(L12)X complex, where L10 forms an elongated spine to which 2 to 4 L12 dimers bind in a sequential fashion. Binds GTP-bound translation factors.

Forms part of the ribosomal stalk which helps the ribosome interact with GTP-bound translation factors. Is thus essential for accurate translation. In Acidovorax sp. (strain JS42), this protein is Large ribosomal subunit protein bL12.